The sequence spans 149 residues: UPAR/Ly6 domain-containing protein bou (149 aa).

A signal peptide spans 1-31; that stretch reads MWPPKHAHIGWLSSLALVVLLMSLQMVMVSG. Residues 32-126 are Extracellular-facing; sequence IECYVCDTSD…YTCDTDGCNA (95 aa). 5 disulfides stabilise this stretch: cysteine 34–cysteine 74, cysteine 37–cysteine 48, cysteine 65–cysteine 91, cysteine 100–cysteine 115, and cysteine 119–cysteine 124. Residue asparagine 64 is glycosylated (N-linked (GlcNAc...) asparagine). Residue asparagine 125 is the site of GPI-anchor amidated asparagine attachment. Positions 126–149 are cleaved as a propeptide — removed in mature form; the sequence is AAGRLELEWGVAAALLTLTWLLRH. The helical transmembrane segment at 127–147 threads the bilayer; that stretch reads AGRLELEWGVAAALLTLTWLL. At 148–149 the chain is on the cytoplasmic side; sequence RH.

Post-translationally, GPI-anchored.

The protein localises to the cell membrane. It is found in the cell junction. It localises to the septate junction. Its subcellular location is the cytoplasm. The protein resides in the cell cortex. The protein localises to the secreted. It is found in the apicolateral cell membrane. Functionally, involved in tracheal paracellular barrier functions mediated by epithelial cell septate junctions. Involved in paracellular barrier functions mediated by glial cell septate junctions in the peripheral nervous system, including the chordotonal organs, but not the hemolymph-brain barrier (the insect blood-brain barrier) of the central nervous system. Required for septate junction assembly, possibly by organizing the preassembly and transport of septate junction proteins such as dlg1/disks large 1, Nrx-IV/Neurexin-IV and the claudin protein kune. Involved in chitin fiber organization during tracheal development. Secreted, possibly in association with extracellular vesicles, to act non-autonomously on tissues distant from its site of expression. The polypeptide is UPAR/Ly6 domain-containing protein bou (Drosophila melanogaster (Fruit fly)).